The primary structure comprises 573 residues: ATP-dependent RNA helicase RhlB (573 aa).

The short motif at 9-37 (VTFSSFDLHPALIAGLESAGFTRCTPIQA) is the Q motif element. In terms of domain architecture, Helicase ATP-binding spans 40–220 (LPVALPGGDV…YEHMNEPEKL (181 aa)). 53 to 60 (AQTGTGKT) contributes to the ATP binding site. The DEAD box signature appears at 166–169 (DEAD). The Helicase C-terminal domain occupies 231 to 393 (RVRQRIYFPS…PVTSELLTPL (163 aa)). The tract at residues 391–560 (TPLPRAPRVP…KPSGSPSLLS (170 aa)) is disordered. Residues 402–411 (EGEEADDDAG) are compositionally biased toward acidic residues. The segment covering 419–432 (REAREQRAAEEQRR) has biased composition (basic and acidic residues). Residues 435-450 (GRSGSGGSRSGSGGGG) are compositionally biased toward gly residues. The span at 451 to 462 (GRREGAGADGKP) shows a compositional bias: basic and acidic residues. A compositionally biased stretch (low complexity) spans 484-499 (PVVAAAAGQAPSAGVA). Residues 505-514 (PRKRRRRRNG) are compositionally biased toward basic residues. The segment covering 541-560 (VVAKPVRAAAKPSGSPSLLS) has biased composition (low complexity).

Belongs to the DEAD box helicase family. RhlB subfamily. Component of the RNA degradosome, which is a multiprotein complex involved in RNA processing and mRNA degradation.

The protein localises to the cytoplasm. The enzyme catalyses ATP + H2O = ADP + phosphate + H(+). DEAD-box RNA helicase involved in RNA degradation. Has RNA-dependent ATPase activity and unwinds double-stranded RNA. The chain is ATP-dependent RNA helicase RhlB from Xanthomonas euvesicatoria pv. vesicatoria (strain 85-10) (Xanthomonas campestris pv. vesicatoria).